A 303-amino-acid chain; its full sequence is Taste receptor type 2 member 13 (303 aa).

Over 1–7 the chain is Extracellular; sequence MESALPS. Residues 8 to 28 traverse the membrane as a helical segment; it reads IFTLVIIAEFIIGNLSNGFIV. The Cytoplasmic segment spans residues 29–55; the sequence is LINCIDWVSKRELSSVDKLLIILAISR. The helical transmembrane segment at 56 to 76 threads the bilayer; that stretch reads IGLIWEILVSWFLALHYLAIF. The Extracellular portion of the chain corresponds to 77–85; it reads VSGTGLRIM. The chain crosses the membrane as a helical span at residues 86-106; it reads IFSWIVSNHFNLWLATIFSIF. At 107–128 the chain is on the cytoplasmic side; sequence YLLKIASFSSPAFLYLKWRVNK. A helical transmembrane segment spans residues 129-149; sequence VILMILLGTLVFLFLNLIQIN. Over 150-184 the chain is Extracellular; it reads MHIKDWLDRYERNTTWNFSMSDFETFSVSVKFTMT. Asparagine 162 and asparagine 166 each carry an N-linked (GlcNAc...) asparagine glycan. A helical membrane pass occupies residues 185 to 205; that stretch reads MFSLTPFTVAFISFLLLIFSL. Over 206 to 232 the chain is Cytoplasmic; the sequence is QKHLQKMQLNYKGHRDPRTKVHTNALK. Residues 233–253 traverse the membrane as a helical segment; sequence IVISFLLFYASFFLCVLISWI. The Extracellular segment spans residues 254 to 261; sequence SELYQNTV. Residues 262-282 form a helical membrane-spanning segment; sequence IYMLCETIGVFSPSSHSFLLI. Residues 283 to 303 lie on the Cytoplasmic side of the membrane; sequence LGNAKLRQAFLLVAAKVWAKR.

The protein belongs to the G-protein coupled receptor T2R family. As to expression, expressed in subsets of taste receptor cells of the tongue and palate epithelium and exclusively in gustducin-positive cells.

The protein resides in the membrane. Functionally, receptor that may play a role in the perception of bitterness and is gustducin-linked. May play a role in sensing the chemical composition of the gastrointestinal content. The activity of this receptor may stimulate alpha gustducin, mediate PLC-beta-2 activation and lead to the gating of TRPM5. In Homo sapiens (Human), this protein is Taste receptor type 2 member 13 (TAS2R13).